The chain runs to 220 residues: NAD(P)H-quinone oxidoreductase subunit M, chloroplastic (220 aa).

The transit peptide at 1–37 directs the protein to the chloroplast; sequence MATTASPFLSPAKLSLERRLPRATWTARRSVRFPPVR. The tract at residues 20 to 91 is disordered; sequence LPRATWTARR…PVQPLAESKN (72 aa). The segment covering 34-44 has biased composition (low complexity); it reads PPVRAQDQQQQ.

This sequence belongs to the NDH complex subunit M family. As to quaternary structure, part of the chloroplast NDH complex, composed of a mixture of chloroplast and nucleus encoded subunits. Component of the NDH subcomplex A, at least composed of ndhH, ndhI, ndhJ, ndhK, ndhL, ndhM, ndhN and ndhO.

Its subcellular location is the plastid. The protein localises to the chloroplast thylakoid membrane. It catalyses the reaction a plastoquinone + NADH + (n+1) H(+)(in) = a plastoquinol + NAD(+) + n H(+)(out). It carries out the reaction a plastoquinone + NADPH + (n+1) H(+)(in) = a plastoquinol + NADP(+) + n H(+)(out). Functionally, NDH shuttles electrons from NAD(P)H:plastoquinone, via FMN and iron-sulfur (Fe-S) centers, to quinones in the photosynthetic chain and possibly in a chloroplast respiratory chain. The immediate electron acceptor for the enzyme in this species is believed to be plastoquinone. Couples the redox reaction to proton translocation, and thus conserves the redox energy in a proton gradient. In Oryza sativa subsp. indica (Rice), this protein is NAD(P)H-quinone oxidoreductase subunit M, chloroplastic.